Reading from the N-terminus, the 843-residue chain is Eisosome protein 1 (843 aa).

The disordered stretch occupies residues 1–53 (MSLISAVEDRDIHNIGKTSGGGSRTSSITSSKKSLKHGSKSLRKPKVYQTTGE). Residue Ser-2 is modified to N-acetylserine. Ser-2 is modified (phosphoserine). Residues 33-46 (KSLKHGSKSLRKPK) show a composition bias toward basic residues. Ser-88 and Ser-130 each carry phosphoserine. The disordered stretch occupies residues 120–174 (KMGPKVVRNNSITSATSKTSKESQTKRKSKESPGAAASKAYSMTMETTSLSSQTN). 2 stretches are compositionally biased toward polar residues: residues 127–137 (RNNSITSATSK) and 163–174 (TMETTSLSSQTN). 4 positions are modified to phosphoserine: Ser-182, Ser-401, Ser-584, and Ser-710. Residues 717–843 (DLPTQLEKIE…QDAISNQEKK (127 aa)) are disordered. Thr-720 is modified (phosphothreonine). Over residues 752-764 (STAAKEATETSSA) the composition is skewed to low complexity. 2 positions are modified to phosphoserine: Ser-763 and Ser-775. Positions 781 to 797 (SGKEDANDCKSAEHSKE) are enriched in basic and acidic residues. Polar residues predominate over residues 798–810 (ISVSQKAGNNKSL). Phosphoserine occurs at positions 816, 828, 829, and 838.

The protein belongs to the EIS1 family.

It localises to the cytoplasmic granule. It is found in the cell membrane. Functionally, required for normal formation of eisosomes, large cytoplasmic protein assemblies that localize to specialized domains on plasma membrane and mark the site of endocytosis. The chain is Eisosome protein 1 (EIS1) from Saccharomyces cerevisiae (strain ATCC 204508 / S288c) (Baker's yeast).